Here is a 473-residue protein sequence, read N- to C-terminus: Zinc finger and BTB domain-containing protein 9 (473 aa).

The BTB domain maps to 48-112 (CDVSLLVQGR…IYSGRLRLPL (65 aa)). Residues 177–279 (QTPVQSSAST…LELPAPPALP (103 aa)) form a disordered region. The segment covering 182 to 196 (SSASTESPASTESPV) has biased composition (low complexity). Positions 211 to 226 (VEEEEEEEEDDDDEDQ) are enriched in acidic residues. Polar residues predominate over residues 227-239 (GSATLSQTPQPQR). A Glycyl lysine isopeptide (Lys-Gly) (interchain with G-Cter in SUMO1); alternate cross-link involves residue Lys-286. Residue Lys-286 forms a Glycyl lysine isopeptide (Lys-Gly) (interchain with G-Cter in SUMO2); alternate linkage. Residues Lys-293 and Lys-307 each participate in a glycyl lysine isopeptide (Lys-Gly) (interchain with G-Cter in SUMO2) cross-link. The disordered stretch occupies residues 293 to 376 (KEEISGSGTQ…VHGPVKLGGT (84 aa)). Over residues 355–364 (SGGGGPGGAG) the composition is skewed to gly residues. Lys-382 participates in a covalent cross-link: Glycyl lysine isopeptide (Lys-Gly) (interchain with G-Cter in SUMO2). A C2H2-type 1 zinc finger spans residues 411–433 (FGCGICNKRFKLKHHLTEHMKTH). Residues 438-460 (HACPHCGRRFRVHACFLRHRDLC) form a C2H2-type 2; atypical zinc finger.

Its subcellular location is the nucleus. In terms of biological role, may be involved in transcriptional regulation. The protein is Zinc finger and BTB domain-containing protein 9 (ZBTB9) of Homo sapiens (Human).